Reading from the N-terminus, the 198-residue chain is Large ribosomal subunit protein bL9 (198 aa).

Over residues 156-166 (RGEDISTRQED) the composition is skewed to basic and acidic residues. Residues 156 to 198 (RGEDISTRQEDQDAAAEALAAAGEFFDPEAHNDGEQEEEAGDK) are disordered.

It belongs to the bacterial ribosomal protein bL9 family.

Functionally, binds to the 23S rRNA. This chain is Large ribosomal subunit protein bL9, found in Rhodopseudomonas palustris (strain BisB18).